A 218-amino-acid polypeptide reads, in one-letter code: MQLDIKICGLKTEDAIAAALDGGASHVGFIFFPKSPRNVDIETAARLRHLASGRAQAVAVTVDADDEMLDRIVEGMRPDVLQLHGHERPVRVEALKKRYHLPVMKAVSVREASDLEVLPAYRGVADRFLLDAKPPAGAELPGGNGIPFDWSLLASLDGKVDYMLSGGLSAVNIGEALSIARPRGIDISSGVERAPGEKDPDLIRAFFSAVRAARGKRE.

The protein belongs to the TrpF family.

The enzyme catalyses N-(5-phospho-beta-D-ribosyl)anthranilate = 1-(2-carboxyphenylamino)-1-deoxy-D-ribulose 5-phosphate. It functions in the pathway amino-acid biosynthesis; L-tryptophan biosynthesis; L-tryptophan from chorismate: step 3/5. The sequence is that of N-(5'-phosphoribosyl)anthranilate isomerase from Chelativorans sp. (strain BNC1).